We begin with the raw amino-acid sequence, 143 residues long: Sporulation-specific protein 73 (143 aa).

The protein belongs to the SPO73 family. In terms of assembly, interacts with SPO71.

It localises to the cytoplasm. The protein resides in the prospore membrane. Functionally, required for spore wall assembly and ascus formation. Involved in the formation and elongation of prospore membranes. This Saccharomyces cerevisiae (strain ATCC 204508 / S288c) (Baker's yeast) protein is Sporulation-specific protein 73.